A 174-amino-acid chain; its full sequence is 5-hydroxymethyl-dUMP N-hydrolase (174 aa).

Position 2 is an N-acetylalanine (alanine 2). Glycine 27 is a 5-hydroxymethyl-dUMP binding site. Residue serine 28 is modified to Phosphoserine. 5-hydroxymethyl-dUMP is bound by residues isoleucine 29, arginine 30, glycine 31, serine 98, glycine 100, and glutamate 104. The residue at position 98 (serine 98) is a Phosphoserine. 4 positions are modified to phosphoserine: serine 123, serine 128, serine 138, and serine 169. Serine 128 is a 5-hydroxymethyl-dUMP binding site.

Belongs to the 2'-deoxynucleoside 5'-phosphate N-hydrolase 1 family. In terms of assembly, monomer and homodimer. Expressed at low levels in brain, colon, lung, peripheral blood leukocytes, placenta, small intestine, and thymus. Expressed at high levels in heart, kidney, liver, skeletal muscle and spleen. Overexpressed in a significant proportion of breast cancers.

The protein localises to the cytoplasm. The protein resides in the nucleus. It carries out the reaction 5-hydroxymethyl-dUMP + H2O = 5-hydroxymethyluracil + 2-deoxy-D-ribose 5-phosphate. With respect to regulation, inhibited by AMP and GMP. Functionally, part of a nucleotide salvage pathway that eliminates epigenetically modified 5-hydroxymethyl-dCMP (hmdCMP) in a two-step process entailing deamination to cytotoxic 5-hydroxymethyl-dUMP (hmdUMP), followed by its hydrolysis into 5-hydroxymethyluracil (hmU) and 2-deoxy-D-ribose 5-phosphate (deoxyribosephosphate). Catalyzes the second step in that pathway, the hydrolysis of the N-glycosidic bond in hmdUMP, degrading this cytotoxic nucleotide to avoid its genomic integration. The polypeptide is 5-hydroxymethyl-dUMP N-hydrolase (Homo sapiens (Human)).